Here is a 361-residue protein sequence, read N- to C-terminus: Histidinol-phosphate aminotransferase (361 aa).

Residue Lys-219 is modified to N6-(pyridoxal phosphate)lysine.

Belongs to the class-II pyridoxal-phosphate-dependent aminotransferase family. Histidinol-phosphate aminotransferase subfamily. As to quaternary structure, homodimer. It depends on pyridoxal 5'-phosphate as a cofactor.

It catalyses the reaction L-histidinol phosphate + 2-oxoglutarate = 3-(imidazol-4-yl)-2-oxopropyl phosphate + L-glutamate. The protein operates within amino-acid biosynthesis; L-histidine biosynthesis; L-histidine from 5-phospho-alpha-D-ribose 1-diphosphate: step 7/9. The sequence is that of Histidinol-phosphate aminotransferase from Acinetobacter baumannii (strain AB307-0294).